We begin with the raw amino-acid sequence, 212 residues long: Ribonuclease HII (212 aa).

The RNase H type-2 domain occupies 12-201 (ELVAGVDEVG…VRAMLEQVSI (190 aa)). 3 residues coordinate a divalent metal cation: aspartate 18, glutamate 19, and aspartate 110.

The protein belongs to the RNase HII family. Requires Mn(2+) as cofactor. Mg(2+) is required as a cofactor.

Its subcellular location is the cytoplasm. The enzyme catalyses Endonucleolytic cleavage to 5'-phosphomonoester.. Endonuclease that specifically degrades the RNA of RNA-DNA hybrids. This is Ribonuclease HII from Stutzerimonas stutzeri (strain A1501) (Pseudomonas stutzeri).